Consider the following 437-residue polypeptide: ATP-dependent RNA helicase RhlB (437 aa).

The Q motif motif lies at 9–37 (QKFADLGLQPQVTEGLEKKGFEYCTPIQA). The region spanning 40–219 (LPVLLTGQDI…FEHMHNPEHV (180 aa)) is the Helicase ATP-binding domain. 53–60 (AQTGTGKT) contacts ATP. Positions 165-168 (DEAD) match the DEAD box motif. Positions 245-390 (ALLQTLIEEE…VSEYDASALI (146 aa)) constitute a Helicase C-terminal domain. Positions 397-437 (IRMRAPRVQQRRTNTGGTRSGNRKPQGRRPRQPRQSAPKQS) are disordered. Basic residues predominate over residues 417 to 428 (GNRKPQGRRPRQ).

This sequence belongs to the DEAD box helicase family. RhlB subfamily. As to quaternary structure, component of the RNA degradosome, which is a multiprotein complex involved in RNA processing and mRNA degradation.

The protein localises to the cytoplasm. It catalyses the reaction ATP + H2O = ADP + phosphate + H(+). Functionally, DEAD-box RNA helicase involved in RNA degradation. Has RNA-dependent ATPase activity and unwinds double-stranded RNA. The chain is ATP-dependent RNA helicase RhlB from Vibrio parahaemolyticus serotype O3:K6 (strain RIMD 2210633).